The following is a 216-amino-acid chain: Splicing factor U2AF 23 kDa subunit (216 aa).

The C3H1-type 1 zinc finger occupies 12-40 (EQDKVNCSFYYKIGACRHGERCSRKHVKP). One can recognise an RRM domain in the interval 44–141 (QTILCPNMYK…RPVYAELSPV (98 aa)). A C3H1-type 2 zinc finger spans residues 143 to 170 (DFREACCRQHETSECQRGGLCNFMHAKK). The segment at 194 to 216 (EMKKEPNSDSTNRWVSVTAERKN) is disordered.

In terms of assembly, forms a heterodimer with the U2AF large subunit. Can also form a homodimer. U2AF large subunit (U2AF59), U2AF small subunit (U2AF23) and SF1 (bpb1) interact to form a complex required for complex A formation. Interacts with cwf13.

It localises to the nucleus. Its function is as follows. Necessary for the splicing of pre-mRNA. The SF1-U2AF59-U2AF23 complex has a role in the recognition of the branch site (5'-UACUAAC-3'), the pyrimidine tract and the 3'-splice site at the 3'-end of introns. The chain is Splicing factor U2AF 23 kDa subunit from Schizosaccharomyces pombe (strain 972 / ATCC 24843) (Fission yeast).